The following is a 257-amino-acid chain: Imidazole glycerol phosphate synthase subunit HisF (257 aa).

Residues Asp11 and Asp130 contribute to the active site.

The protein belongs to the HisA/HisF family. In terms of assembly, heterodimer of HisH and HisF.

The protein resides in the cytoplasm. It catalyses the reaction 5-[(5-phospho-1-deoxy-D-ribulos-1-ylimino)methylamino]-1-(5-phospho-beta-D-ribosyl)imidazole-4-carboxamide + L-glutamine = D-erythro-1-(imidazol-4-yl)glycerol 3-phosphate + 5-amino-1-(5-phospho-beta-D-ribosyl)imidazole-4-carboxamide + L-glutamate + H(+). It participates in amino-acid biosynthesis; L-histidine biosynthesis; L-histidine from 5-phospho-alpha-D-ribose 1-diphosphate: step 5/9. Functionally, IGPS catalyzes the conversion of PRFAR and glutamine to IGP, AICAR and glutamate. The HisF subunit catalyzes the cyclization activity that produces IGP and AICAR from PRFAR using the ammonia provided by the HisH subunit. This is Imidazole glycerol phosphate synthase subunit HisF from Shewanella piezotolerans (strain WP3 / JCM 13877).